Reading from the N-terminus, the 102-residue chain is Large ribosomal subunit protein bL21 (102 aa).

The protein belongs to the bacterial ribosomal protein bL21 family. Part of the 50S ribosomal subunit. Contacts protein L20.

This protein binds to 23S rRNA in the presence of protein L20. The sequence is that of Large ribosomal subunit protein bL21 from Campylobacter hominis (strain ATCC BAA-381 / DSM 21671 / CCUG 45161 / LMG 19568 / NCTC 13146 / CH001A).